Reading from the N-terminus, the 675-residue chain is Acetyl-coenzyme A synthetase 1 (675 aa).

Over residues 1 to 10 (MPESTQQSHL) the composition is skewed to polar residues. A disordered region spans residues 1 to 32 (MPESTQQSHLSLDHEKMQQPPKGFTERSKTKP). Residues 212 to 215 (RGGK) and threonine 331 contribute to the CoA site. ATP contacts are provided by residues 407–409 (GEP), 431–436 (DTYWQT), aspartate 522, and arginine 537. Residue serine 545 coordinates CoA. Arginine 548 contributes to the ATP binding site. Residue arginine 609 coordinates CoA.

It belongs to the ATP-dependent AMP-binding enzyme family.

The catalysed reaction is acetate + ATP + CoA = acetyl-CoA + AMP + diphosphate. This is Acetyl-coenzyme A synthetase 1 (ACS1) from Candida albicans (Yeast).